Reading from the N-terminus, the 225-residue chain is NAD(P)H-quinone oxidoreductase subunit K, chloroplastic (225 aa).

Positions 43, 44, 108, and 139 each coordinate [4Fe-4S] cluster.

Belongs to the complex I 20 kDa subunit family. NDH is composed of at least 16 different subunits, 5 of which are encoded in the nucleus. [4Fe-4S] cluster is required as a cofactor.

It is found in the plastid. It localises to the chloroplast thylakoid membrane. It carries out the reaction a plastoquinone + NADH + (n+1) H(+)(in) = a plastoquinol + NAD(+) + n H(+)(out). The catalysed reaction is a plastoquinone + NADPH + (n+1) H(+)(in) = a plastoquinol + NADP(+) + n H(+)(out). Its function is as follows. NDH shuttles electrons from NAD(P)H:plastoquinone, via FMN and iron-sulfur (Fe-S) centers, to quinones in the photosynthetic chain and possibly in a chloroplast respiratory chain. The immediate electron acceptor for the enzyme in this species is believed to be plastoquinone. Couples the redox reaction to proton translocation, and thus conserves the redox energy in a proton gradient. This chain is NAD(P)H-quinone oxidoreductase subunit K, chloroplastic, found in Lemna minor (Common duckweed).